A 361-amino-acid chain; its full sequence is Phospho-N-acetylmuramoyl-pentapeptide-transferase (361 aa).

Transmembrane regions (helical) follow at residues 25–45, 72–92, 95–115, 135–155, 169–189, 200–220, 240–260, 264–284, 289–309, and 338–358; these read TGGA…WIID, TPTM…VLWA, LNPY…VGFY, LLIE…LGRG, VVLN…VGAG, GLAI…SYLV, LAVL…FNAP, IFMG…IAVA, IVLA…IVQV, and QIVI…LSTL.

This sequence belongs to the glycosyltransferase 4 family. MraY subfamily. The cofactor is Mg(2+).

It localises to the cell inner membrane. The enzyme catalyses UDP-N-acetyl-alpha-D-muramoyl-L-alanyl-gamma-D-glutamyl-meso-2,6-diaminopimeloyl-D-alanyl-D-alanine + di-trans,octa-cis-undecaprenyl phosphate = di-trans,octa-cis-undecaprenyl diphospho-N-acetyl-alpha-D-muramoyl-L-alanyl-D-glutamyl-meso-2,6-diaminopimeloyl-D-alanyl-D-alanine + UMP. It functions in the pathway cell wall biogenesis; peptidoglycan biosynthesis. Functionally, catalyzes the initial step of the lipid cycle reactions in the biosynthesis of the cell wall peptidoglycan: transfers peptidoglycan precursor phospho-MurNAc-pentapeptide from UDP-MurNAc-pentapeptide onto the lipid carrier undecaprenyl phosphate, yielding undecaprenyl-pyrophosphoryl-MurNAc-pentapeptide, known as lipid I. The chain is Phospho-N-acetylmuramoyl-pentapeptide-transferase from Rhodopseudomonas palustris (strain HaA2).